We begin with the raw amino-acid sequence, 277 residues long: NH(3)-dependent NAD(+) synthetase (277 aa).

Residue 46–53 (GISGGQDS) coordinates ATP. Aspartate 52 lines the Mg(2+) pocket. Arginine 142 provides a ligand contact to deamido-NAD(+). Threonine 162 is a binding site for ATP. Glutamate 167 contributes to the Mg(2+) binding site. Deamido-NAD(+) is bound by residues lysine 175 and aspartate 182. ATP contacts are provided by lysine 191 and threonine 213. 263-264 (HK) contributes to the deamido-NAD(+) binding site.

It belongs to the NAD synthetase family. As to quaternary structure, homodimer.

The catalysed reaction is deamido-NAD(+) + NH4(+) + ATP = AMP + diphosphate + NAD(+) + H(+). Its pathway is cofactor biosynthesis; NAD(+) biosynthesis; NAD(+) from deamido-NAD(+) (ammonia route): step 1/1. In terms of biological role, catalyzes the ATP-dependent amidation of deamido-NAD to form NAD. Uses ammonia as a nitrogen source. This chain is NH(3)-dependent NAD(+) synthetase, found in Corynebacterium glutamicum (strain ATCC 13032 / DSM 20300 / JCM 1318 / BCRC 11384 / CCUG 27702 / LMG 3730 / NBRC 12168 / NCIMB 10025 / NRRL B-2784 / 534).